Reading from the N-terminus, the 211-residue chain is Heat shock 70 kDa protein 4L (211 aa).

S161 bears the Phosphoserine mark.

This sequence belongs to the heat shock protein 70 family. Homodimer.

The protein resides in the cytoplasm. Its subcellular location is the nucleus. Functionally, possesses chaperone activity in vitro where it inhibits aggregation of citrate synthase. The chain is Heat shock 70 kDa protein 4L from Mesocricetus auratus (Golden hamster).